Consider the following 593-residue polypeptide: MSGKIEYISGPVVKADLPGARLYELVFVGEIKLFGEVVRVQGDKAFIQVYEDTTGLKPGEPVVRTGEPLSAWLGPTIMGKIYDGVQRPLKNIEEISKSPFIARGVGYDQAPPLDLKAEFDFKPNVKPGEEVYPGDVLGSVKETELITHYILYPPLPEYVPGTVEWIADGKYKVDDVIARIKTKRGVIEVKMWHKWPVRRPRPFREKLPPVEPLITGVRTIDTMFPIAKGGTAAIPGPFGSGKTVAIRTLSMYAQSRIIIPVLCGERGNEAADALQGLLKLKDPNTGRPLLERTTIIVNTSNMPVAAREASVYMGTTIGEYFRDQGYDVLVLADSTSRWAEAMREVALRIGEMPSEEGYPAYLPTRLAEFYERAGRVVLMGSKERIGSLTIAASVSPPGGDFTEPVTSNTLRFIGAFWPLSPRLAYSRHYPAIDWLLAFSRYVDTVEVWWSKNISPDWRKIRDTLQSILVKEAELQEIVRILGTEALSEYEKHILNVAYMIREGFLKQDAYNPVDTPSSPIKQYLLMKAIYAYYEEGLKAIEAGIPASVLRELETVKRLPRLRMEITNDVAKEELTKFIEMLISEIRTTISKRQ.

236–243 (GPFGSGKT) provides a ligand contact to ATP.

It belongs to the ATPase alpha/beta chains family. In terms of assembly, has multiple subunits with at least A(3), B(3), C, D, E, F, H, I and proteolipid K(x).

It localises to the cell membrane. It catalyses the reaction ATP + H2O + 4 H(+)(in) = ADP + phosphate + 5 H(+)(out). In terms of biological role, component of the A-type ATP synthase that produces ATP from ADP in the presence of a proton gradient across the membrane. The A chain is the catalytic subunit. This is A-type ATP synthase subunit A from Pyrobaculum islandicum (strain DSM 4184 / JCM 9189 / GEO3).